The chain runs to 103 residues: Co-chaperonin GroES (103 aa).

It belongs to the GroES chaperonin family. Heptamer of 7 subunits arranged in a ring. Interacts with the chaperonin GroEL.

The protein localises to the cytoplasm. Together with the chaperonin GroEL, plays an essential role in assisting protein folding. The GroEL-GroES system forms a nano-cage that allows encapsulation of the non-native substrate proteins and provides a physical environment optimized to promote and accelerate protein folding. GroES binds to the apical surface of the GroEL ring, thereby capping the opening of the GroEL channel. This is Co-chaperonin GroES from Gloeothece citriformis (strain PCC 7424) (Cyanothece sp. (strain PCC 7424)).